The chain runs to 444 residues: Cytokine receptor-like factor 3 (444 aa).

A coiled-coil region spans residues 1 to 65; it reads MSIEAEALLQ…QELQTAVSRL (65 aa). Residues 177–270 form the Fibronectin type-III domain; that stretch reads PPVQIEELVE…PQTGYTTLAP (94 aa).

It belongs to the cytokine receptor-like factor 3 family.

Its subcellular location is the cytoplasm. Functionally, may play a role in the negative regulation of cell cycle progression. The polypeptide is Cytokine receptor-like factor 3 (crlf3) (Danio rerio (Zebrafish)).